The chain runs to 393 residues: S-adenosylmethionine synthase 1 (393 aa).

Glu-9 contacts Mg(2+). His-15 serves as a coordination point for ATP. Residue Glu-43 participates in K(+) binding. L-methionine contacts are provided by Glu-56 and Gln-99. Residues 167–169 (DGK), 235–238 (SGRF), Asp-246, 252–253 (RK), Ala-269, Lys-273, and Lys-277 contribute to the ATP site. Asp-246 contributes to the L-methionine binding site. Lys-277 contributes to the L-methionine binding site.

This sequence belongs to the AdoMet synthase family. Homotetramer. The cofactor is Mn(2+). Requires Mg(2+) as cofactor. Co(2+) serves as cofactor. It depends on K(+) as a cofactor.

It localises to the cytoplasm. The catalysed reaction is L-methionine + ATP + H2O = S-adenosyl-L-methionine + phosphate + diphosphate. It functions in the pathway amino-acid biosynthesis; S-adenosyl-L-methionine biosynthesis; S-adenosyl-L-methionine from L-methionine: step 1/1. In terms of biological role, catalyzes the formation of S-adenosylmethionine from methionine and ATP. The reaction comprises two steps that are both catalyzed by the same enzyme: formation of S-adenosylmethionine (AdoMet) and triphosphate, and subsequent hydrolysis of the triphosphate. The polypeptide is S-adenosylmethionine synthase 1 (SAMS1) (Brassica juncea (Indian mustard)).